Consider the following 292-residue polypeptide: uncharacterized protein (292 aa).

The protein belongs to the glycosyltransferase 2 family. WaaE/KdtX subfamily.

This is an uncharacterized protein from Rickettsia typhi (strain ATCC VR-144 / Wilmington).